Reading from the N-terminus, the 462-residue chain is Na(+)/H(+) antiporter NhaA 2 (462 aa).

Residues 1-31 (MKSSTREQTPVTSPTPHDPTPPTPPRGSTPL) are disordered. Over residues 16-27 (PHDPTPPTPPRG) the composition is skewed to pro residues. 11 consecutive transmembrane segments (helical) span residues 52-72 (IGGALLLLGTVVALVWANSPW), 96-116 (LTLGQWAADGLLAIFFFIAGL), 134-154 (LVPVAAAVGGMAVPAVVYVLV), 165-185 (GWAIPTATDIAFAVAVLAVIS), 195-215 (FLLTLAVVDDLLAITIIAIFY), 218-238 (TLAVLPLLGALAVIAVFGLLV), 244-264 (SWWLLIPLAVVAWALMHASGI), 309-329 (FAVPVFAFFSAGVTVGGLSGL), 337-357 (VALGIVAGLVVGKAAGILGAT), 382-402 (LLGGIGFTVSLLIGELAFGAG), and 408-428 (HVKVGVLTGSLLAAALAAVVL).

This sequence belongs to the NhaA Na(+)/H(+) (TC 2.A.33) antiporter family.

The protein resides in the cell membrane. The catalysed reaction is Na(+)(in) + 2 H(+)(out) = Na(+)(out) + 2 H(+)(in). Na(+)/H(+) antiporter that extrudes sodium in exchange for external protons. The chain is Na(+)/H(+) antiporter NhaA 2 from Kineococcus radiotolerans (strain ATCC BAA-149 / DSM 14245 / SRS30216).